The primary structure comprises 128 residues: MIPVLLVTICLAVFPFQGSSIILESGNINDYEIVYPKKVAVLPTGAMNSAHPCYDPVTCQPKEKEDCESGPCCDNCKFLKEGTICKMARGDNMHDYCNGKTCDCPRNPYKGEHDPMEWPAPAKGSVLM.

The signal sequence occupies residues 1–20 (MIPVLLVTICLAVFPFQGSS). A propeptide spanning residues 21 to 65 (IILESGNINDYEIVYPKKVAVLPTGAMNSAHPCYDPVTCQPKEKE) is cleaved from the precursor. The Disintegrin domain maps to 26–112 (GNINDYEIVY…DCPRNPYKGE (87 aa)). 5 disulfides stabilise this stretch: Cys53–Cys59, Cys67–Cys76, Cys72–Cys97, Cys73–Cys102, and Cys85–Cys104. The Cell attachment site motif lies at 89–91 (RGD). The propeptide occupies 116-128 (MEWPAPAKGSVLM).

Monomer. As to expression, expressed by the venom gland.

The protein resides in the secreted. Functionally, the disintegrin ocellatusin-10c1 is a poor inhibitor of platelet aggregation. The disintegrin inhibits the adhesion of cells expressing the RGD-dependent integrin alpha-5/beta-1 (ITGA5/ITGB1) to immobilized fibronectin. Inhibition on alpha-2b/beta-3 (ITGA2B/ITGB3) is low, and there is no inhibition on alpha-1/beta-1 (ITGA1/ITGB1), alpha-2/beta-1 (ITGA2/ITGB1) and alpha-6/beta-1 (ITGA6/ITGB1). The short monomeric disintegrin ocellatusin inhibits ADP-induced platelet aggregation (IC(50)=168 nM). Inhibits alpha-5/beta-1 (ITGA5/ITGB1) integrin and induces the expression of a ligand-induced binding site epitope on beta-1 integrin subunit. Has a direct chemotactic stimulus on human neutrophils in vitro. This chain is Disintegrin ocellatusin, found in Echis ocellatus (Ocellated saw-scaled viper).